The sequence spans 305 residues: MIKQRTLKQSIKVTGVGLHSGEKVTLTLRPAMPNTGVVYYRTDLNPTVAFPADPNSVRDTMLCTALINEQGVRISTVEHLNAALAGLGIDNIIIEVDAPEIPIMDGSASPFIYLLLDAGIEEQNAAKKFIRIKEYVRVEDGDKWAEFKPYNGFRLDFTIDFDHPAIGKDVRNYEMNFSAQAFVHQISRARTFGFMKDIEYLQSQGLVLGGSLDNAIVLDDYRILNEDGLRFKDELVRHKMLDAIGDLYMAGYNIIGDFKAYKSGHGLNNKLLRAVLANQEAWEFVTFEDKEQVPQGYVAPAQVLI.

Residues His79, His238, and Asp242 each contribute to the Zn(2+) site. Residue His265 is the Proton donor of the active site.

It belongs to the LpxC family. Zn(2+) is required as a cofactor.

It catalyses the reaction a UDP-3-O-[(3R)-3-hydroxyacyl]-N-acetyl-alpha-D-glucosamine + H2O = a UDP-3-O-[(3R)-3-hydroxyacyl]-alpha-D-glucosamine + acetate. It functions in the pathway glycolipid biosynthesis; lipid IV(A) biosynthesis; lipid IV(A) from (3R)-3-hydroxytetradecanoyl-[acyl-carrier-protein] and UDP-N-acetyl-alpha-D-glucosamine: step 2/6. Catalyzes the hydrolysis of UDP-3-O-myristoyl-N-acetylglucosamine to form UDP-3-O-myristoylglucosamine and acetate, the committed step in lipid A biosynthesis. The polypeptide is UDP-3-O-acyl-N-acetylglucosamine deacetylase (Haemophilus influenzae (strain PittEE)).